The chain runs to 695 residues: Tripartite terminase subunit 1 (695 aa).

The C3H1-type zinc finger occupies 182–210; it reads CLECLQEVCLTPNQGTSLQAMLPDTACSH. 621 to 628 serves as a coordination point for ATP; it reads YNRTWERE.

It belongs to the herpesviridae TRM1 protein family. As to quaternary structure, associates with TRM2 and TRM3 to form the tripartite terminase complex. Interacts with portal protein.

It is found in the host nucleus. Its function is as follows. Component of the molecular motor that translocates viral genomic DNA in empty capsid during DNA packaging. Forms a tripartite terminase complex together with TRM2 and TRM3 in the host cytoplasm. Once the complex reaches the host nucleus, it interacts with the capsid portal vertex. This portal forms a ring in which genomic DNA is translocated into the capsid. TRM1 carries an endonuclease activity that plays an important role for the cleavage of concatemeric viral DNA into unit length genomes. The polypeptide is Tripartite terminase subunit 1 (Homo sapiens (Human)).